Reading from the N-terminus, the 780-residue chain is LPS-assembly protein LptD (780 aa).

A signal peptide spans 1 to 24 (MKKRLPTLLASLIGSALYSQQALA).

It belongs to the LptD family. In terms of assembly, component of the lipopolysaccharide transport and assembly complex. Interacts with LptE and LptA.

The protein localises to the cell outer membrane. In terms of biological role, together with LptE, is involved in the assembly of lipopolysaccharide (LPS) at the surface of the outer membrane. The sequence is that of LPS-assembly protein LptD from Sodalis glossinidius (strain morsitans).